A 141-amino-acid chain; its full sequence is Hemoglobin subunit alpha (141 aa).

One can recognise a Globin domain in the interval 1-141 (VLSSKDKTNV…VSTVLTSKYR (141 aa)). Serine 3 carries the post-translational modification Phosphoserine. An N6-succinyllysine modification is found at lysine 7. Residue threonine 8 is modified to Phosphothreonine. Lysine 11 bears the N6-succinyllysine mark. Position 16 is an N6-acetyllysine; alternate (lysine 16). Lysine 16 is modified (N6-succinyllysine; alternate). Phosphotyrosine is present on tyrosine 24. Lysine 40 carries the post-translational modification N6-succinyllysine. Phosphoserine is present on serine 49. Histidine 58 contributes to the O2 binding site. Histidine 87 contributes to the heme b binding site. The residue at position 102 (serine 102) is a Phosphoserine. Threonine 108 carries the post-translational modification Phosphothreonine. Serine 124 bears the Phosphoserine mark. 2 positions are modified to phosphothreonine: threonine 134 and threonine 137. Residue serine 138 is modified to Phosphoserine.

The protein belongs to the globin family. In terms of assembly, heterotetramer of two alpha chains and two beta chains. As to expression, red blood cells.

In terms of biological role, involved in oxygen transport from the lung to the various peripheral tissues. Hemopressin acts as an antagonist peptide of the cannabinoid receptor CNR1. Hemopressin-binding efficiently blocks cannabinoid receptor CNR1 and subsequent signaling. This Camelus dromedarius (Dromedary) protein is Hemoglobin subunit alpha (HBA).